Consider the following 440-residue polypeptide: Phosphatidylcholine-sterol acyltransferase (440 aa).

A signal peptide spans methionine 1–proline 24. Asparagine 44 is a glycosylation site (N-linked (GlcNAc...) asparagine). An intrachain disulfide couples cysteine 74 to cysteine 98. A glycan (N-linked (GlcNAc...) asparagine) is linked at asparagine 108. The active-site Nucleophile is serine 205. Asparagine 296 carries N-linked (GlcNAc...) asparagine glycosylation. Cysteine 337 and cysteine 380 are oxidised to a cystine. Catalysis depends on charge relay system residues aspartate 369 and histidine 401. Residue asparagine 408 is glycosylated (N-linked (GlcNAc...) asparagine).

This sequence belongs to the AB hydrolase superfamily. Lipase family. In terms of tissue distribution, detected in blood plasma (at protein level). Highly expressed in liver.

The protein resides in the secreted. It catalyses the reaction a sterol + a 1,2-diacyl-sn-glycero-3-phosphocholine = a sterol ester + a 1-acyl-sn-glycero-3-phosphocholine. It carries out the reaction a 1-O-alkyl-2-acetyl-sn-glycero-3-phosphocholine + H2O = a 1-O-alkyl-sn-glycero-3-phosphocholine + acetate + H(+). The enzyme catalyses a 1-hexadecanoyl-2-acyl-sn-glycero-3-phosphocholine + (24S)-hydroxycholesterol = (24S)-24-hydroxycholesterol ester + 1-hexadecanoyl-sn-glycero-3-phosphocholine. The catalysed reaction is (24S)-hydroxycholesterol + 1-hexadecanoyl-2-(9Z,12Z-octadecadienoyl)-sn-glycero-3-phosphocholine = (24S)-hydroxycholesterol 3-linoleoate + 1-hexadecanoyl-sn-glycero-3-phosphocholine. It catalyses the reaction 1-hexadecanoyl-2-(5Z,8Z,11Z,14Z-eicosatetraenoyl)-sn-glycero-3-phosphocholine + cholesterol = cholesteryl (5Z,8Z,11Z,14Z)-eicosatetraenoate + 1-hexadecanoyl-sn-glycero-3-phosphocholine. It carries out the reaction 1-hexadecanoyl-2-(9Z-octadecenoyl)-sn-glycero-3-phosphocholine + cholesterol = cholesteryl (9Z-octadecenoate) + 1-hexadecanoyl-sn-glycero-3-phosphocholine. The enzyme catalyses 1-hexadecanoyl-2-(8Z,11Z,14Z-eicosatrienoyl)-sn-glycero-3-phosphocholine + cholesterol = cholesteryl (8Z,11Z,14Z)-eicosatrienoate + 1-hexadecanoyl-sn-glycero-3-phosphocholine. The catalysed reaction is 1-hexadecanoyl-2-(5Z,8Z,11Z-eicosatrienoyl)-sn-glycero-3-phosphocholine + cholesterol = cholesteryl (5Z,8Z,11Z)-eicosatrienoate + 1-hexadecanoyl-sn-glycero-3-phosphocholine. It catalyses the reaction 1-hexadecanoyl-2-(5Z,8Z,11Z,14Z,17Z-eicosapentaenoyl)-sn-glycero-3-phosphocholine + cholesterol = (5Z,8Z,11Z,14Z,17Z-eicosapentaenoyl)-cholesterol + 1-hexadecanoyl-sn-glycero-3-phosphocholine. It carries out the reaction 1-hexadecanoyl-2-(9Z,12Z-octadecadienoyl)-sn-glycero-3-phosphocholine + cholesterol = cholesteryl (9Z,12Z)-octadecadienoate + 1-hexadecanoyl-sn-glycero-3-phosphocholine. The enzyme catalyses 1-hexadecanoyl-2-(6Z,9Z,12Z-octadecatrienoyl)-sn-glycero-3-phosphocholine + cholesterol = (6Z,9Z,12Z-octadecatrienoyl)-cholesterol + 1-hexadecanoyl-sn-glycero-3-phosphocholine. The catalysed reaction is 1-hexadecanoyl-2-(11Z,14Z,17Z-eicosatrienoyl)-sn-glycero-3-phosphocholine + cholesterol = (11Z,14Z,17Z-eicosatrienoyl)-cholesterol + 1-hexadecanoyl-sn-glycero-3-phosphocholine. It catalyses the reaction 1-hexadecanoyl-2-(9Z,12Z,15Z-octadecatrienoyl)-sn-glycero-3-phosphocholine + cholesterol = (9Z,12Z,15Z-octadecatrienoyl)-cholesterol + 1-hexadecanoyl-sn-glycero-3-phosphocholine. It carries out the reaction 1-hexadecanoyl-2-(9Z,12Z-octadecadienoyl)-sn-glycero-3-phosphocholine + H2O = (9Z,12Z)-octadecadienoate + 1-hexadecanoyl-sn-glycero-3-phosphocholine + H(+). The enzyme catalyses 1-hexadecanoyl-2-(5Z,8Z,11Z,14Z-eicosatetraenoyl)-sn-glycero-3-phosphocholine + H2O = 1-hexadecanoyl-sn-glycero-3-phosphocholine + (5Z,8Z,11Z,14Z)-eicosatetraenoate + H(+). The catalysed reaction is a 1-O-alkyl-2-acetyl-sn-glycero-3-phosphocholine + 1-hexadecanoyl-sn-glycero-3-phosphocholine = 1-hexadecanoyl-2-acetyl-sn-glycero-3-phosphocholine + a 1-O-alkyl-sn-glycero-3-phosphocholine. Central enzyme in the extracellular metabolism of plasma lipoproteins. Synthesized mainly in the liver and secreted into plasma where it converts cholesterol and phosphatidylcholines (lecithins) to cholesteryl esters and lysophosphatidylcholines on the surface of high and low density lipoproteins (HDLs and LDLs). The cholesterol ester is then transported back to the liver. Also produced in the brain by primary astrocytes, and esterifies free cholesterol on nascent APOE-containing lipoproteins secreted from glia and influences cerebral spinal fluid (CSF) APOE- and APOA1 levels. Together with APOE and the cholesterol transporter ABCA1, plays a key role in the maturation of glial-derived, nascent lipoproteins. Required for remodeling high-density lipoprotein particles into their spherical forms. Has a preference for plasma 16:0-18:2 or 18:O-18:2 phosphatidylcholines. Catalyzes the hydrolysis of 1-O-alkyl-2-acetyl-sn-glycero-3-phosphocholine (platelet-activating factor or PAF) to 1-O-alkyl-sn-glycero-3-phosphocholine (lyso-PAF). Also catalyzes the transfer of the acetate group from PAF to 1-hexadecanoyl-sn-glycero-3-phosphocholine forming lyso-PAF. Catalyzes the esterification of (24S)-hydroxycholesterol (24(S)OH-C), also known as cerebrosterol to produce 24(S)OH-C monoesters. The protein is Phosphatidylcholine-sterol acyltransferase (LCAT) of Oryctolagus cuniculus (Rabbit).